The sequence spans 313 residues: METRVQHGSGSQALLQARRDSGRPHGEPDLRDVLTQQVHILSLDQIRAIRNTNEYTEGPTVAPRPGVKSAPRSASQPKSERPHGLPEHRHFGRVQHTQTHASPRAPLSRSISTVSTGSRSSTRTSTSSNSSEQRLLGSSSGPVADGIVRMQPKSELKSSELKPLSKEDLGAHSYRCEDCGKCKCKECTYPRTLPSCWICDKQCLCSAQNVVDYGTCVCCVKGLFYHCSNDDEDNCADNPCSCSQSHCCTRWSAMGVVSLFLPCLWCYLPAKGCLKLCQGCYDRVNRPGCRCKHSNTVCCKVPSVPPRNFEKPT.

Residues 1-14 (METRVQHGSGSQAL) show a composition bias toward polar residues. Disordered stretches follow at residues 1 to 31 (METR…PDLR) and 54 to 146 (EYTE…VADG). Composition is skewed to basic and acidic residues over residues 17–31 (ARRD…PDLR) and 78–89 (KSERPHGLPEHR). A compositionally biased stretch (low complexity) spans 108–131 (SRSISTVSTGSRSSTRTSTSSNSS). Positions 132–141 (EQRLLGSSSG) are enriched in polar residues. Residues 175 to 289 (RCEDCGKCKC…CYDRVNRPGC (115 aa)) enclose the SPR domain.

This sequence belongs to the sprouty family. As to expression, brain and interlimb region.

Its subcellular location is the cytoplasm. The protein resides in the membrane. In terms of biological role, acts as an antagonist of FGF-induced retinal lens fiber differentiation. Inhibits TGFB-induced epithelial-to-mesenchymal transition in retinal lens epithelial cells. May play an important role in FGF-mediated patterning of the mid/hindbrain region by acting to modulate the signaling effects of FGF8. This chain is Protein sprouty homolog 2 (SPRY2), found in Gallus gallus (Chicken).